The primary structure comprises 148 residues: Lysozyme C (148 aa).

Residues 1 to 18 form the signal peptide; that stretch reads MKAVIILGLVLLSVTVQG. The C-type lysozyme domain occupies 19–148; that stretch reads KIFERCELAR…VSQYVQGCGV (130 aa). Disulfide bonds link Cys24/Cys146, Cys48/Cys134, Cys83/Cys99, and Cys95/Cys113. Residues Glu53 and Asp71 contribute to the active site.

This sequence belongs to the glycosyl hydrolase 22 family. In terms of assembly, monomer.

The protein localises to the secreted. It catalyses the reaction Hydrolysis of (1-&gt;4)-beta-linkages between N-acetylmuramic acid and N-acetyl-D-glucosamine residues in a peptidoglycan and between N-acetyl-D-glucosamine residues in chitodextrins.. In terms of biological role, lysozymes have primarily a bacteriolytic function; those in tissues and body fluids are associated with the monocyte-macrophage system and enhance the activity of immunoagents. The chain is Lysozyme C (LYZ) from Papio anubis (Olive baboon).